The sequence spans 342 residues: Aristolochene synthase prx2 (342 aa).

Mg(2+)-binding residues include aspartate 115, asparagine 244, serine 248, and glutamate 252. 2 residues coordinate (2E,6E)-farnesyl diphosphate: arginine 340 and tyrosine 341.

The protein belongs to the terpene synthase family. Homodimer. Mg(2+) is required as a cofactor.

It catalyses the reaction (2E,6E)-farnesyl diphosphate = (+)-aristolochene + diphosphate. The protein operates within sesquiterpene biosynthesis; aristolochene biosynthesis; aristolochene from farnesyl diphosphate: step 1/1. In terms of biological role, aristolochene synthase; part of the gene cluster that mediates the biosynthesis of PR-toxin, a bicyclic sesquiterpene belonging to the eremophilane class and acting as a mycotoxin. The first step of the pathway is catalyzed by the aristolochene synthase which performs the cyclization of trans,trans-farnesyl diphosphate (FPP) to the bicyclic sesquiterpene aristolochene. Following the formation of aristolochene, the non-oxygenated aristolochene is converted to the trioxygenated intermediate eremofortin B, via 7-epi-neopetasone. This conversion appears to involve three enzymes, a hydroxysterol oxidase-like enzyme, the quinone-oxidase prx3 that forms the quinone-type-structure in the bicyclic nucleus of aristolochene with the C8-oxo group and the C-3 hydroxyl group, and the P450 monooxygenase prx9 that introduces the epoxide at the double bond between carbons 1 and 2. No monoxy or dioxy-intermediates have been reported to be released to the broth, so these three early oxidative reactions may be coupled together. Eremofortin B is further oxidized by another P450 monooxygenase, that introduces a second epoxide between carbons 7 and 11 prior to acetylation to eremofortin A by the acetyltransferase prx11. The second epoxidation may be performed by a second P450 monooxygenase. After the acetylation step, the conversion of eremofortin A to eremofortin C and then to PR-toxin requires only two enzymes. First the conversion of eremofortin A to eremofortin C proceeds by oxidation of the side chain of the molecule at C-12 and is catalyzed by the short-chain oxidoreductase prx1. The cytochrome P450 monooxygenase prx8 also plays a role in this step. The primary alcohol formed at C-12 is finally oxidized by the short-chain alcohol dehydrogenase prx4 that forms PR-toxin. This is Aristolochene synthase prx2 from Penicillium rubens (strain ATCC 28089 / DSM 1075 / NRRL 1951 / Wisconsin 54-1255) (Penicillium chrysogenum).